The chain runs to 624 residues: Protein POLLEN DEFECTIVE IN GUIDANCE 1 (624 aa).

The tract at residues 20-63 (SFENDDTSIRRSSSDPITGNVASESPRDYGKRKRSKKKKKKVNQ) is disordered. The span at 33 to 42 (SDPITGNVAS) shows a compositional bias: polar residues. Over residues 49 to 61 (GKRKRSKKKKKKV) the composition is skewed to basic residues. 6 helical membrane-spanning segments follow: residues 263-283 (VLIDTGFFVCVNSFLSLLTVM), 305-325 (ASELSDLACFLVLATGTILLG), 391-411 (FVSDLALTMAASILHSFILLA), 413-433 (AITLSTCIVAHNNALLALLVS), 545-565 (LTFVPLAPACVVIRVLTPVYA), and 578-598 (LWMVILFVITYIMLTSLKVLI).

Belongs to the TAPT1 family. As to quaternary structure, interacts with CRT3, but not with CRT1 or CNX. Expressed in inflorescences, siliques, roots and shoots. Expressed in early embryo, endosperm, mature pollen and pollen tubes, synergide cells and weakly in antipodal cells.

It is found in the membrane. The protein localises to the endoplasmic reticulum lumen. In terms of biological role, probable component of the calreticulin 3 (CRT3) complex, acting probably as a co-chaperone involved in protein retention in the endoplasmic reticulum lumen. Required for micropylar pollen tube guidance. Plays an essential role in cell plate orientation or positioning in early embryo patterning. The sequence is that of Protein POLLEN DEFECTIVE IN GUIDANCE 1 (POD1) from Arabidopsis thaliana (Mouse-ear cress).